A 148-amino-acid polypeptide reads, in one-letter code: Cysteine proteinase inhibitor 5 (148 aa).

Positions Met1–Ala25 are cleaved as a signal peptide. Positions Gln99 to Gly103 match the Secondary area of contact motif.

Belongs to the cystatin family. Phytocystatin subfamily.

It localises to the secreted. In terms of biological role, specific inhibitor of cysteine proteinases. Probably involved in the regulation of endogenous processes and in defense against pests and pathogens. This chain is Cysteine proteinase inhibitor 5, found in Oryza sativa subsp. japonica (Rice).